The primary structure comprises 173 residues: RNA pyrophosphohydrolase (173 aa).

The region spanning 6–149 (GFRANVGIII…KRDVYRKVMK (144 aa)) is the Nudix hydrolase domain. Residues 38 to 59 (GGVDEGESAEEAMYRELYEEVG) carry the Nudix box motif.

This sequence belongs to the Nudix hydrolase family. RppH subfamily. It depends on a divalent metal cation as a cofactor.

Its function is as follows. Accelerates the degradation of transcripts by removing pyrophosphate from the 5'-end of triphosphorylated RNA, leading to a more labile monophosphorylated state that can stimulate subsequent ribonuclease cleavage. In Shewanella piezotolerans (strain WP3 / JCM 13877), this protein is RNA pyrophosphohydrolase.